A 674-amino-acid polypeptide reads, in one-letter code: Xaa-Pro aminopeptidase 2 (674 aa).

The signal sequence occupies residues 1 to 22 (MAQAYWQCYPWLVLLCACAWSY). N-linked (GlcNAc...) asparagine glycosylation occurs at asparagine 65. Residue arginine 116 participates in substrate binding. N-linked (GlcNAc...) asparagine glycosylation is found at asparagine 278 and asparagine 293. Histidine 430 serves as a coordination point for substrate. Residues aspartate 450, aspartate 461, and histidine 524 each contribute to the Zn(2+) site. The substrate site is built by histidine 524, histidine 533, and glutamate 555. Residues glutamate 555 and glutamate 569 each contribute to the Zn(2+) site. Alanine 650 is lipidated: GPI-anchor amidated alanine. The propeptide at 651–674 (SAPHTTSLASMWVASALAILSWSC) is removed in mature form.

It belongs to the peptidase M24B family. Homotrimer. Zn(2+) serves as cofactor. In terms of processing, N-glycosylated. In terms of tissue distribution, expressed strongly in lung, liver and heart, and at lower levels in kidney, testis, brain, spleen and skeletal muscle.

It is found in the cell membrane. The catalysed reaction is Release of any N-terminal amino acid, including proline, that is linked to proline, even from a dipeptide or tripeptide.. Inhibited by the chelating agents 1,10-phenanthroline and EDTA. Inhibited by the thiol-containing compounds 2-mercaptoethanol and dithiothreitol. Also inhibited by apstatin, captopril and p-(ch1oromercuri)benzenesulfonic acid. Weakly inhibited by D,L-2-mercaptomethyl-3-guanidinoethylthiopropanoic acid and N-[l-(R,S)-carboxy-(2-phenylethyl)]-Ala-Ala-Phe-p-aminobenzoate. Inhibited by ramiprilat and enalaprilat, in a Mn(2+)-dependent manner. Metal ions have a complex substrate- and concentration-dependent effect on activity. Activity towards Arg-Pro-Pro and Gly-Pro-Hyp is stimulated by Mn(2+) ion concentrations of 10-100 uM and then inhibited at Mn(2+) concentrations of 1-2 mM. Mn(2+) concentrations in excess of 2 mM stimulate activity towards Gly-Pro-Hyp but inhibit activity towards Arg-Pro-Pro. Zn(2+) and Co(2+) ions also inhibit activity towards Arg-Pro-Pro at high concentrations. Activity towards bradykinin is inhibited by Mn(2+) concentrations in excess of 1 mM. Its function is as follows. Membrane-bound metalloprotease which catalyzes the removal of a penultimate prolyl residue from the N-termini of peptides, such as Arg-Pro-Pro. May play a role in the metabolism of the vasodilator bradykinin. The chain is Xaa-Pro aminopeptidase 2 from Rattus norvegicus (Rat).